A 184-amino-acid polypeptide reads, in one-letter code: Signal peptidase complex subunit 3 (184 aa).

The Cytoplasmic portion of the chain corresponds to 1 to 14; sequence MFSFVQRFQNVSNQ. The chain crosses the membrane as a helical; Signal-anchor for type II membrane protein span at residues 15–35; sequence AFSMGIVMVVFIMASSYYQLI. Topologically, residues 36-184 are lumenal; sequence NNNAFSVPSN…TLTVENKNKV (149 aa). N-linked (GlcNAc...) asparagine glycosylation is found at Asn-102 and Asn-173.

The protein belongs to the SPCS3 family. In terms of assembly, component of the signal peptidase complex (SPC) composed of a catalytic subunit SEC11 and three accessory subunits SPC1, SPC2 and SPC3. The complex induces a local thinning of the ER membrane which is used to measure the length of the signal peptide (SP) h-region of protein substrates. This ensures the selectivity of the complex towards h-regions shorter than 18-20 amino acids. Interacts with SEC11. SPC associates with the translocon complex.

The protein localises to the endoplasmic reticulum membrane. Essential component of the signal peptidase complex (SPC) which catalyzes the cleavage of N-terminal signal sequences from nascent proteins as they are translocated into the lumen of the endoplasmic reticulum. Essential for the SPC catalytic activity, possibly by stabilizing and positioning the active center of the complex close to the lumenal surface. Essential for viability. The polypeptide is Signal peptidase complex subunit 3 (SPC3) (Saccharomyces cerevisiae (strain ATCC 204508 / S288c) (Baker's yeast)).